The sequence spans 177 residues: Large ribosomal subunit protein uL6 (177 aa).

The protein belongs to the universal ribosomal protein uL6 family. Part of the 50S ribosomal subunit.

In terms of biological role, this protein binds to the 23S rRNA, and is important in its secondary structure. It is located near the subunit interface in the base of the L7/L12 stalk, and near the tRNA binding site of the peptidyltransferase center. This chain is Large ribosomal subunit protein uL6, found in Vibrio cholerae serotype O1 (strain ATCC 39541 / Classical Ogawa 395 / O395).